The chain runs to 321 residues: Olfactory receptor 14J1 (321 aa).

The Extracellular portion of the chain corresponds to 1–23 (MVNLTSMSGFLLMGFSDERKLQI). N-linked (GlcNAc...) asparagine glycosylation is present at N3. Residues 24-44 (LHALVFLVTYLLALTGNLLII) form a helical membrane-spanning segment. The Cytoplasmic portion of the chain corresponds to 45-52 (TIITVDRR). The helical transmembrane segment at 53–73 (LHSPMYYFLKHLSLLDLCFIS) threads the bilayer. Residues 74–97 (VTVPQSIANSLMGNGYISLVQCIL) are Extracellular-facing. A disulfide bridge connects residues C95 and C187. Residues 98 to 118 (QVFFFIALASSEVAILTVMSY) form a helical membrane-spanning segment. Residues 119 to 137 (DRYAAICQPLHYETIMDPR) are Cytoplasmic-facing. The chain crosses the membrane as a helical span at residues 138-158 (ACRHAVIAVWIAGGLSGLMHA). Topologically, residues 159 to 194 (AINFSIPLCGKRVIHQFFCDVPQMLKLACSYEFINE) are extracellular. A helical membrane pass occupies residues 195–215 (IALAAFTTSAAFICLISIVLS). The Cytoplasmic portion of the chain corresponds to 216–235 (YIRIFSTVLRIPSAEGRTKV). The chain crosses the membrane as a helical span at residues 236-256 (FSTCLPHLFVATFFLSAAGFE). The Extracellular portion of the chain corresponds to 257 to 269 (FLRLPSDSSSTVD). The helical transmembrane segment at 270 to 290 (LVFSVFYTVIPPTLNPVIYSL) threads the bilayer. The Cytoplasmic portion of the chain corresponds to 291 to 321 (RNDSMKAALRKMLSKEELPQRKMCLKAMFKL).

Belongs to the G-protein coupled receptor 1 family.

It localises to the cell membrane. Its function is as follows. Odorant receptor. This chain is Olfactory receptor 14J1 (OR14J1), found in Homo sapiens (Human).